We begin with the raw amino-acid sequence, 469 residues long: Aryl-phospho-beta-D-glucosidase BglH (469 aa).

The active-site Proton donor is Glu175. Glu368 acts as the Nucleophile in catalysis.

The protein belongs to the glycosyl hydrolase 1 family.

The enzyme catalyses 6-phospho-beta-D-glucosyl-(1-&gt;4)-D-glucose + H2O = D-glucose 6-phosphate + D-glucose. In terms of biological role, catalyzes the hydrolysis of aryl-phospho-beta-D-glucosides such as 4-methylumbelliferyl-phospho-beta-D-glucopyranoside (MUG-P), phosphoarbutin and phosphosalicin. Plays a major role in the utilization of arbutin or salicin as the sole carbon source. BglA and BglH are the major proteins contributing to hydrolysis of MUG-P by extracts of late-exponential-phase or stationary-phase B.subtilis cells. This is Aryl-phospho-beta-D-glucosidase BglH (bglH) from Bacillus subtilis (strain 168).